The following is an 873-amino-acid chain: MQDKYLPSAVEQAAQQHWKAIDAYKVSEHAVGPDGKEKSKFYACSMLPYPSGKLHMGHVRNYTINDVMARYLRMNGRNVLMPMGWDAFGMPAENAALNNGVAPAAWTYDNIAYMKKQMQSMGLAIDWSREVATCSPEYYRWNQWLFLKMLEKGIAYRKTGTVNWDPVDQTVLANEQVIDGRGWRSGAVVEKREIPMYYLRITDYAQELLGDLEGLGWPERVKIMQQNWIGRSEGVRFAFPHEIKGADGKLINDGKLYVFTTRADTIMGVTFCAVAAEHPLATHAAESNPALAAFIEECKHGSVMEADMATMEKKGMPTGLKVTHPLTGEQVDVWVGNYVLMTYGDGAVMGVPAHDERDFAFALKYNLPIKQVIDVKGQAYSTDAWLEWYGDKEHGLCIHSGKYDGLGYKAAVDAIAADLAAKGLGEKKVTWRLRDWGISRQRYWGTPIPLIHCDSCGVVPVPEKDLPVVLPEDLVPDGTGNPLAKDPRFLECTCPSCGKPARRETDTMDTFIDSCWYYMRYTCPDAGTMVDARNDYWMPMDQYIGGIEHAILHLLYARFWTKVMRDMGLVKFDEPFTNLLTQGMVLNETFYREDASGKKTWYNPADVDVQTDERGRPAGATAKADGQPVVIGGIEKMSKSKNNGIDPQALIDQYGADTARLFVMFAAPPEQQLEWSGSGVEGASRFLRRVWNYGYANAQAIRDGAGTAPTADDAALRREIHTVLKQANYDYERIQYNTVVSATMKMLNALEDAKTASPAGRREGFSVLLRVLYPVVPHIAHGLWQELGYAAETVDILDAAWPQVDEAALVRSEIELVLQVNGKVRGSLTVPADADRAAIEATAAASEIVAKFAAGAAPKKIVVVPGRLVNVVL.

A 'HIGH' region motif is present at residues 48 to 58 (PYPSGKLHMGH). Residues 636-640 (KMSKS) carry the 'KMSKS' region motif. Lys-639 serves as a coordination point for ATP.

The protein belongs to the class-I aminoacyl-tRNA synthetase family.

It localises to the cytoplasm. It catalyses the reaction tRNA(Leu) + L-leucine + ATP = L-leucyl-tRNA(Leu) + AMP + diphosphate. This chain is Leucine--tRNA ligase, found in Cupriavidus metallidurans (strain ATCC 43123 / DSM 2839 / NBRC 102507 / CH34) (Ralstonia metallidurans).